A 375-amino-acid chain; its full sequence is Trichodiene synthase (375 aa).

This sequence belongs to the trichodiene synthase family.

The catalysed reaction is (2E,6E)-farnesyl diphosphate = trichodiene + diphosphate. It functions in the pathway sesquiterpene biosynthesis; trichothecene biosynthesis. Its function is as follows. TS is a member of the terpene cyclase group of enzymes. It catalyzes the isomerization and cyclization of farnesyl pyro-phosphate to form trichodiene, the first cyclic intermediate in the biosynthetic pathway for trichothecenes. It serves to branch trichothecene biosynthesis from the isoprenoid pathway. The sequence is that of Trichodiene synthase (TRI5) from Fusarium asiaticum.